Consider the following 138-residue polypeptide: Large ribosomal subunit protein eL32 (138 aa).

This sequence belongs to the eukaryotic ribosomal protein eL32 family.

The chain is Large ribosomal subunit protein eL32 from Saccharolobus islandicus (strain Y.N.15.51 / Yellowstone #2) (Sulfolobus islandicus).